We begin with the raw amino-acid sequence, 112 residues long: Nitrogen regulatory protein P-II (112 aa).

Tyr-51 is subject to O-UMP-tyrosine.

It belongs to the P(II) protein family. Homotrimer. Post-translationally, uridylylated/deuridylylated by GlnD.

Its function is as follows. P-II indirectly controls the transcription of the glutamine synthetase gene (GlnA). P-II prevents NR-II-catalyzed conversion of NR-I to NR-I-phosphate, the transcriptional activator of GlnA. When P-II is uridylylated to P-II-UMP, these events are reversed. When the ratio of Gln to 2-ketoglutarate decreases, P-II is uridylylated to P-II-UMP, which causes the deadenylation of glutamine synthetase by GlnE, so activating the enzyme. The protein is Nitrogen regulatory protein P-II (glnB) of Pasteurella multocida (strain Pm70).